Reading from the N-terminus, the 504-residue chain is Probable cytosol aminopeptidase (504 aa).

Residues lysine 268 and aspartate 273 each coordinate Mn(2+). Lysine 280 is an active-site residue. Positions 291, 350, and 352 each coordinate Mn(2+). Arginine 354 is an active-site residue.

It belongs to the peptidase M17 family. Mn(2+) serves as cofactor.

The protein localises to the cytoplasm. The enzyme catalyses Release of an N-terminal amino acid, Xaa-|-Yaa-, in which Xaa is preferably Leu, but may be other amino acids including Pro although not Arg or Lys, and Yaa may be Pro. Amino acid amides and methyl esters are also readily hydrolyzed, but rates on arylamides are exceedingly low.. The catalysed reaction is Release of an N-terminal amino acid, preferentially leucine, but not glutamic or aspartic acids.. Presumably involved in the processing and regular turnover of intracellular proteins. Catalyzes the removal of unsubstituted N-terminal amino acids from various peptides. The protein is Probable cytosol aminopeptidase of Psychromonas ingrahamii (strain DSM 17664 / CCUG 51855 / 37).